We begin with the raw amino-acid sequence, 150 residues long: Arginine repressor (150 aa).

This sequence belongs to the ArgR family.

Its subcellular location is the cytoplasm. It participates in amino-acid biosynthesis; L-arginine biosynthesis [regulation]. In terms of biological role, regulates arginine biosynthesis genes. This chain is Arginine repressor, found in Ruminiclostridium cellulolyticum (strain ATCC 35319 / DSM 5812 / JCM 6584 / H10) (Clostridium cellulolyticum).